Consider the following 358-residue polypeptide: Peptide chain release factor 1 (358 aa).

Gln236 is subject to N5-methylglutamine.

The protein belongs to the prokaryotic/mitochondrial release factor family. Post-translationally, methylated by PrmC. Methylation increases the termination efficiency of RF1.

The protein localises to the cytoplasm. Its function is as follows. Peptide chain release factor 1 directs the termination of translation in response to the peptide chain termination codons UAG and UAA. In Corynebacterium efficiens (strain DSM 44549 / YS-314 / AJ 12310 / JCM 11189 / NBRC 100395), this protein is Peptide chain release factor 1.